Consider the following 419-residue polypeptide: Probable serine/threonine-protein kinase CST (419 aa).

The N-myristoyl glycine moiety is linked to residue Gly2. Cys4 is lipidated: S-palmitoyl cysteine. The interval 8–48 (FSSSSPSKTGLHSHATTNNHSNGTEFSSTTGATTNSSVGQQ) is disordered. The segment covering 15–48 (KTGLHSHATTNNHSNGTEFSSTTGATTNSSVGQQ) has biased composition (polar residues). One can recognise a Protein kinase domain in the interval 86–368 (FKPDSMLGQG…KEVVEVLEHI (283 aa)). 92–100 (LGQGGFGKV) serves as a coordination point for ATP. A Phosphoserine modification is found at Ser117. Residue Lys124 coordinates ATP. Tyr169 is subject to Phosphotyrosine. Asp218 acts as the Proton acceptor in catalysis. Ser222 is subject to Phosphoserine. A phosphothreonine mark is found at Thr253 and Thr258. A Phosphotyrosine modification is found at Tyr266. Residues 378–390 (SSTKQAVANSSRS) are compositionally biased toward polar residues. The segment at 378–419 (SSTKQAVANSSRSSPHHYRYKAGALGAERKRATPGRFGSVEK) is disordered.

Belongs to the protein kinase superfamily. Ser/Thr protein kinase family. As to quaternary structure, interacts with SOBIR1/EVR and RLK5/HAE. In terms of processing, autophosphorylated on serine, threonine and tyrosine residues.

It localises to the cell membrane. The protein localises to the nucleus. It catalyses the reaction L-seryl-[protein] + ATP = O-phospho-L-seryl-[protein] + ADP + H(+). The catalysed reaction is L-threonyl-[protein] + ATP = O-phospho-L-threonyl-[protein] + ADP + H(+). In terms of biological role, acts as a spatial inhibitor of signaling that modulates abscission zone cell adhesion and expansion. Acts both directly and indirectly by physically interacting with RLK5/HAE and SOBIR1/EVR at the cell surface. The protein is Probable serine/threonine-protein kinase CST of Arabidopsis thaliana (Mouse-ear cress).